A 330-amino-acid chain; its full sequence is Phosphate acyltransferase (330 aa).

It belongs to the PlsX family. In terms of assembly, homodimer. Probably interacts with PlsY.

The protein resides in the cytoplasm. The catalysed reaction is a fatty acyl-[ACP] + phosphate = an acyl phosphate + holo-[ACP]. Its pathway is lipid metabolism; phospholipid metabolism. Catalyzes the reversible formation of acyl-phosphate (acyl-PO(4)) from acyl-[acyl-carrier-protein] (acyl-ACP). This enzyme utilizes acyl-ACP as fatty acyl donor, but not acyl-CoA. In Bacillus licheniformis (strain ATCC 14580 / DSM 13 / JCM 2505 / CCUG 7422 / NBRC 12200 / NCIMB 9375 / NCTC 10341 / NRRL NRS-1264 / Gibson 46), this protein is Phosphate acyltransferase.